The sequence spans 460 residues: Inactive ubiquitin carboxyl-terminal hydrolase MINDY-4B (460 aa).

Residues 41–76 (TNNSTPQNHEGNHTSADENEDGTGLSQPKGQGHLPS) are disordered.

The protein belongs to the MINDY deubiquitinase family. FAM188 subfamily.

The polypeptide is Inactive ubiquitin carboxyl-terminal hydrolase MINDY-4B (Homo sapiens (Human)).